The primary structure comprises 401 residues: Heparan-sulfate 6-O-sulfotransferase 1 (401 aa).

At 1 to 4 (MVER) the chain is on the cytoplasmic side. A helical; Signal-anchor for type II membrane protein membrane pass occupies residues 5–27 (ASKFVLVVAGSACFMLILYQYAG). Topologically, residues 28–401 (PGLSLGAPGG…DYMSHIIEKW (374 aa)) are lumenal. Residue 83–91 (HIQKTGGTT) coordinates 3'-phosphoadenylyl sulfate. Residues 113-114 (KK), Arg130, Trp135, and His140 contribute to the substrate site. His140 serves as the catalytic Proton acceptor. 3'-phosphoadenylyl sulfate is bound by residues Arg175 and Ser183. Substrate-binding residues include His187 and Trp194. The N-linked (GlcNAc...) asparagine glycan is linked to Asn254. 307–309 (MQY) is a binding site for 3'-phosphoadenylyl sulfate. Asn310 carries an N-linked (GlcNAc...) asparagine glycan. A 3'-phosphoadenylyl sulfate-binding site is contributed by 313 to 314 (RA). Positions 367-389 (ERLLHRSKEALPREDTEEPGRVP) are disordered.

This sequence belongs to the sulfotransferase 6 family. N-glycosylated.

The protein localises to the membrane. The enzyme catalyses alpha-D-glucosaminyl-[heparan sulfate](n) + 3'-phosphoadenylyl sulfate = 6-sulfo-alpha-D-glucosaminyl-[heparan sulfate](n) + adenosine 3',5'-bisphosphate + H(+). Inhibited by dithiothreitol and stimulated by protamine. Its function is as follows. 6-O-sulfation enzyme which catalyzes the transfer of sulfate from 3'-phosphoadenosine 5'-phosphosulfate (PAPS) to position 6 of the N-sulfoglucosamine residue (GlcNS) of heparan sulfate. Also transfers sulfate to CDSNS-heparin and performs the crucial step modification in the biosynthesis of anticoagulant heparan sulfate (HSact). Critical for normal neuronal development where it may play a role in neuron branching. May also play a role in limb development. May prefer iduronic acid. This Cricetulus griseus (Chinese hamster) protein is Heparan-sulfate 6-O-sulfotransferase 1.